The chain runs to 654 residues: tRNA 5-methylaminomethyl-2-thiouridine biosynthesis bifunctional protein MnmC (654 aa).

The tract at residues 1 to 236 (MSTLLQHAQI…KWEVMHGVYT (236 aa)) is tRNA (mnm(5)s(2)U34)-methyltransferase. The tract at residues 262 to 654 (IGAGLAGSAT…FALRRLIRGK (393 aa)) is FAD-dependent cmnm(5)s(2)U34 oxidoreductase.

In the N-terminal section; belongs to the methyltransferase superfamily. tRNA (mnm(5)s(2)U34)-methyltransferase family. The protein in the C-terminal section; belongs to the DAO family. Requires FAD as cofactor.

The protein localises to the cytoplasm. It catalyses the reaction 5-aminomethyl-2-thiouridine(34) in tRNA + S-adenosyl-L-methionine = 5-methylaminomethyl-2-thiouridine(34) in tRNA + S-adenosyl-L-homocysteine + H(+). Its function is as follows. Catalyzes the last two steps in the biosynthesis of 5-methylaminomethyl-2-thiouridine (mnm(5)s(2)U) at the wobble position (U34) in tRNA. Catalyzes the FAD-dependent demodification of cmnm(5)s(2)U34 to nm(5)s(2)U34, followed by the transfer of a methyl group from S-adenosyl-L-methionine to nm(5)s(2)U34, to form mnm(5)s(2)U34. This Pseudomonas entomophila (strain L48) protein is tRNA 5-methylaminomethyl-2-thiouridine biosynthesis bifunctional protein MnmC.